We begin with the raw amino-acid sequence, 38 residues long: Large ribosomal subunit protein bL36 (38 aa).

The protein belongs to the bacterial ribosomal protein bL36 family.

In Pseudomonas entomophila (strain L48), this protein is Large ribosomal subunit protein bL36.